We begin with the raw amino-acid sequence, 581 residues long: Lipoprotein LpqB (581 aa).

The signal sequence occupies residues 1-23 (MRNHVSRYLTALIAVGCAATTAA). Cys24 is lipidated: N-palmitoyl cysteine. The S-diacylglycerol cysteine moiety is linked to residue Cys24.

It belongs to the LpqB lipoprotein family.

It localises to the cell membrane. The sequence is that of Lipoprotein LpqB from Corynebacterium diphtheriae (strain ATCC 700971 / NCTC 13129 / Biotype gravis).